We begin with the raw amino-acid sequence, 41 residues long: Conotoxin Ac4.2 (41 aa).

A propeptide spanning residues 1–11 is cleaved from the precursor; it reads FDGRNAAVNER. P13 carries the 4-hydroxyproline modification. O-linked (HexNAc...) threonine glycans are attached at residues T18 and T20. A 4-hydroxyproline mark is found at P29 and P33. C40 is subject to Cysteine amide.

This sequence belongs to the conotoxin A superfamily. Post-translationally, contains 3 disulfide bonds. As to expression, expressed by the venom duct.

The protein localises to the secreted. Probable neurotoxin with ion channel inhibitor activity. This Conus achatinus (Little frog cone) protein is Conotoxin Ac4.2.